Here is a 910-residue protein sequence, read N- to C-terminus: Eukaryotic translation initiation factor 3 subunit C (910 aa).

The disordered stretch occupies residues 1–21 (MSRFFANGSESESESSEEEIQ). Acidic residues predominate over residues 11–20 (SESESSEEEI). Phosphoserine occurs at positions 34, 165, 176, and 185. The interval 157-279 (FREAPDQESE…IRKRAEDDED (123 aa)) is disordered. A compositionally biased stretch (acidic residues) spans 162–186 (DQESEAEDEVVALESDGGDAGDDSD). Residues 194–207 (AVPKAVKSAPAKAA) are compositionally biased toward low complexity. Acidic residues predominate over residues 209-235 (ADDDDSDDSIDWDSDSESETESSDDEN). Positions 240-268 (MRERFLKRTTEKEEKDDDKRKDKRKEQKT) are enriched in basic and acidic residues. In terms of domain architecture, PCI spans 639–815 (FHMHINLELL…ETVGMHRSEP (177 aa)). The disordered stretch occupies residues 847–910 (FFQRGNMGNR…QQQVQTIDEE (64 aa)). The span at 862-874 (NRNQNNQGGNWLG) shows a compositional bias: low complexity. Over residues 882–891 (RNRNQRGHHK) the composition is skewed to basic residues. Positions 895–910 (DRQQQQQQQVQTIDEE) are enriched in low complexity.

Belongs to the eIF-3 subunit C family. Component of the eukaryotic translation initiation factor 3 (eIF-3) complex. The eIF-3 complex interacts with pix.

The protein localises to the cytoplasm. Functionally, component of the eukaryotic translation initiation factor 3 (eIF-3) complex, which is involved in protein synthesis of a specialized repertoire of mRNAs and, together with other initiation factors, stimulates binding of mRNA and methionyl-tRNAi to the 40S ribosome. The eIF-3 complex specifically targets and initiates translation of a subset of mRNAs involved in cell proliferation. The sequence is that of Eukaryotic translation initiation factor 3 subunit C from Drosophila melanogaster (Fruit fly).